Consider the following 169-residue polypeptide: uncharacterized protein (169 aa).

Residues 1 to 21 form the signal peptide; sequence MVPVARASLFTLACLLVSVCA.

In terms of tissue distribution, component of the acid-soluble and acid-insoluble organic matrix of calcified shell layers (at protein level).

The protein resides in the secreted. This is an uncharacterized protein from Haliotis asinina (Donkey's ear abalone).